Here is a 463-residue protein sequence, read N- to C-terminus: Protein phosphatase PP2A regulatory subunit B (463 aa).

2 WD repeats span residues 27–66 and 87–128; these read TEADIISAVEFDHTGDYLATGDKGGRVVLFERNHSKKGCE and EIEE…LKVV. Phosphoserine is present on S134. WD repeat units lie at residues 174–212, 223–263, 282–320, and 337–378; these read AHAYHINSISVNSDAETYISADDLRINLWNLSISDHSFN, ELTE…LCDN, EIISSISDVKFSQNGRYILSRDYLTLKIWDVNMEKAPVK, and ENDC…PGDR.

It belongs to the phosphatase 2A regulatory subunit B family. PP2A exists in several trimeric forms, all of which consist of a core composed of a catalytic subunit associated with a 65 kDa (PR65) (Subunit A) and a 55 kDa (PR55) (Subunit B) regulatory subunit.

Phosphatase 2A affects a variety of biological processes in the cell such as transcription, cell cycle progression and cellular morphogenesis, and provides an initial identification of critical substrates for this phosphatase. The regulatory subunit may direct the catalytic subunit to distinct, albeit overlapping, subsets of substrates. The protein is Protein phosphatase PP2A regulatory subunit B (pab1) of Schizosaccharomyces pombe (strain 972 / ATCC 24843) (Fission yeast).